Here is a 180-residue protein sequence, read N- to C-terminus: Large ribosomal subunit protein uL18m (180 aa).

It belongs to the universal ribosomal protein uL18 family. In terms of assembly, component of the mitochondrial ribosome large subunit (39S) which comprises a 16S rRNA and about 50 distinct proteins.

The protein resides in the mitochondrion. Functionally, together with thiosulfate sulfurtransferase (TST), acts as a mitochondrial import factor for the cytosolic 5S rRNA. The precursor form shows RNA chaperone activity; is able to fold the 5S rRNA into an import-competent conformation that is recognized by rhodanese (TST). Both the cytoplasmic and mitochondrial forms are able to bind to the helix IV-loop D in the gamma domain of the 5S rRNA. The chain is Large ribosomal subunit protein uL18m (MRPL18) from Bos taurus (Bovine).